The following is a 432-amino-acid chain: Adenylosuccinate synthetase (432 aa).

Residues 13–19 (GDEGKGK) and 41–43 (GHT) contribute to the GTP site. The active-site Proton acceptor is the aspartate 14. The Mg(2+) site is built by aspartate 14 and glycine 41. IMP-binding positions include 14 to 17 (DEGK), 39 to 42 (NAGH), threonine 130, arginine 144, glutamine 225, threonine 240, and arginine 304. Histidine 42 acts as the Proton donor in catalysis. 300-306 (ATTGRRR) is a substrate binding site. Residues arginine 306, 332-334 (KLD), and 415-417 (STG) contribute to the GTP site.

Belongs to the adenylosuccinate synthetase family. In terms of assembly, homodimer. The cofactor is Mg(2+).

It is found in the cytoplasm. The enzyme catalyses IMP + L-aspartate + GTP = N(6)-(1,2-dicarboxyethyl)-AMP + GDP + phosphate + 2 H(+). The protein operates within purine metabolism; AMP biosynthesis via de novo pathway; AMP from IMP: step 1/2. Functionally, plays an important role in the de novo pathway of purine nucleotide biosynthesis. Catalyzes the first committed step in the biosynthesis of AMP from IMP. The chain is Adenylosuccinate synthetase from Sodalis glossinidius (strain morsitans).